A 607-amino-acid chain; its full sequence is Dolichyl-diphosphooligosaccharide--protein glycosyltransferase subunit 1 (607 aa).

The N-terminal stretch at 1 to 23 (MEAPAAGLFLLLLLGTWAPAPGS) is a signal peptide. Residues 24–438 (ASSEAPPLIN…TFNKVLMLQE (415 aa)) lie on the Lumenal side of the membrane. Lys187 is modified (N6-acetyllysine). The N-linked (GlcNAc...) asparagine glycan is linked to Asn299. A helical membrane pass occupies residues 439 to 457 (PLLVVAAFYILFFTVIIYV). Topologically, residues 458-607 (RLDFSITKDP…TKIDHILDAL (150 aa)) are cytoplasmic. The residue at position 538 (Lys538) is an N6-acetyllysine; alternate. Residue Lys538 forms a Glycyl lysine isopeptide (Lys-Gly) (interchain with G-Cter in SUMO2); alternate linkage.

The protein belongs to the OST1 family. Component of the oligosaccharyltransferase (OST) complex. OST exists in two different complex forms which contain common core subunits RPN1, RPN2, OST48, OST4, DAD1 and TMEM258, either STT3A or STT3B as catalytic subunits, and form-specific accessory subunits. STT3A complex assembly occurs through the formation of 3 subcomplexes. Subcomplex 1 contains RPN1 and TMEM258, subcomplex 2 contains the STT3A-specific subunits STT3A, DC2/OSTC, and KCP2 as well as the core subunit OST4, and subcomplex 3 contains RPN2, DAD1, and OST48. The STT3A complex can form stable complexes with the Sec61 complex or with both the Sec61 and TRAP complexes. Interacts with TMEM35A/NACHO. Post-translationally, ubiquitinated by the ECS(ASB11) complex. Ubiquitinated by RNF128, leading to degradation in a proteasome/lysosome-dependent manner. Ufmylated by UFL1 in response to endoplasmic reticulum stress, promoting reticulophagy of endoplasmic reticulum sheets. Expressed in all tissues tested.

The protein localises to the endoplasmic reticulum membrane. It is found in the melanosome. It functions in the pathway protein modification; protein glycosylation. Functionally, subunit of the oligosaccharyl transferase (OST) complex that catalyzes the initial transfer of a defined glycan (Glc(3)Man(9)GlcNAc(2) in eukaryotes) from the lipid carrier dolichol-pyrophosphate to an asparagine residue within an Asn-X-Ser/Thr consensus motif in nascent polypeptide chains, the first step in protein N-glycosylation. N-glycosylation occurs cotranslationally and the complex associates with the Sec61 complex at the channel-forming translocon complex that mediates protein translocation across the endoplasmic reticulum (ER). All subunits are required for a maximal enzyme activity. The chain is Dolichyl-diphosphooligosaccharide--protein glycosyltransferase subunit 1 from Homo sapiens (Human).